Consider the following 257-residue polypeptide: MAMFLDTEAKVSKLKKGRRKLWPLPGAPREKQTNVFKFPTDGNDSDEDTNTNSGSSSDGEDGLLTSSGSDSVFNSTDYFSTPEDSQNCTPSDVSDLSDSENLDFKPADVLHDSENSTSPKFITSLVSSDSENSGADSSEEEIEEFIKSKAKQSLQLDAKTEEITSEEDCCVQEDSYDSDGDDVEAFIRQRAEMAITKHKTKRTISTSDDEGPRKSRKKRASKRISSSDDSEDETPKTKMTGTPPLAGNSCYVWPWLN.

Disordered stretches follow at residues 1 to 178 and 194 to 248; these read MAMF…SYDS and AITK…LAGN. The span at 12–21 shows a compositional bias: basic residues; it reads SKLKKGRRKL. Residues 50 to 71 are compositionally biased toward low complexity; sequence NTNSGSSSDGEDGLLTSSGSDS. The span at 72–94 shows a compositional bias: polar residues; sequence VFNSTDYFSTPEDSQNCTPSDVS. A compositionally biased stretch (basic and acidic residues) spans 102–114; the sequence is LDFKPADVLHDSE. Over residues 115 to 126 the composition is skewed to polar residues; that stretch reads NSTSPKFITSLV. Residues 127–136 are compositionally biased toward low complexity; the sequence is SSDSENSGAD. Positions 163–178 are enriched in acidic residues; it reads ITSEEDCCVQEDSYDS.

The protein belongs to the herpesviridae BKRF4 family.

This is an uncharacterized protein from Saimiriine herpesvirus 2 (strain 11) (SaHV-2).